Consider the following 196-residue polypeptide: MSQPIKLLVGLANPGPEYAKTRHNAGAWVVEELARIHNVTLKNEPKFFGLTGRLLINSQELRVLIPTTFMNLSGKAIAALANFYQIKPEEIMVAHDELDLPPGVAKFKQGGGHGGHNGLKDTISKLGNNKEFYRLRLGIGHPGHKDKVAGYVLGKAPAKEQECLDAAVDESVRCLEILMKDGLTKAQNRLHTFKAE.

Residue tyrosine 18 participates in tRNA binding. Histidine 23 (proton acceptor) is an active-site residue. TRNA is bound by residues phenylalanine 69, asparagine 71, and asparagine 117.

It belongs to the PTH family. Monomer.

Its subcellular location is the cytoplasm. It catalyses the reaction an N-acyl-L-alpha-aminoacyl-tRNA + H2O = an N-acyl-L-amino acid + a tRNA + H(+). Hydrolyzes ribosome-free peptidyl-tRNAs (with 1 or more amino acids incorporated), which drop off the ribosome during protein synthesis, or as a result of ribosome stalling. In terms of biological role, catalyzes the release of premature peptidyl moieties from peptidyl-tRNA molecules trapped in stalled 50S ribosomal subunits, and thus maintains levels of free tRNAs and 50S ribosomes. The sequence is that of Peptidyl-tRNA hydrolase from Vibrio cholerae serotype O1 (strain ATCC 39315 / El Tor Inaba N16961).